A 427-amino-acid polypeptide reads, in one-letter code: Endothelin-1 receptor (427 aa).

Positions 1–20 (METFCFRVSFWVALLGCVIS) are cleaved as a signal peptide. Over 21–80 (DNPESHSTNLSTHVDDFTTFRGTEFSLVVTTHRPTNLALPSNGSMHNYCPQQTKITSAFK) the chain is Extracellular. N-linked (GlcNAc...) asparagine glycans are attached at residues N29 and N62. The helical transmembrane segment at 81 to 102 (YINTVISCTIFIVGMVGNATLL) threads the bilayer. Topologically, residues 103 to 112 (RIIYQNKCMR) are cytoplasmic. The helical transmembrane segment at 113–132 (NGPNALIASLALGDLIYVVI) threads the bilayer. At 133–159 (DLPINVFKLLAGRWPFENHDFGVFLCK) the chain is on the extracellular side. C158 and C239 are oxidised to a cystine. A helical transmembrane segment spans residues 160–181 (LFPFLQKSSVGITVLNLCALSV). The Cytoplasmic portion of the chain corresponds to 182-205 (DRYRAVASWSRVQGIGIPLVTAIE). The helical transmembrane segment at 206–229 (IVSIWILSFILAIPEAIGFVMVPF) threads the bilayer. The Extracellular segment spans residues 230–256 (EYKGEEHKTCMLNATSKFMEFYQDVKD). A helical membrane pass occupies residues 257–278 (WWLFGFYFCMPLVCTAIFYTLM). Topologically, residues 279–306 (TCEMLNRRNGSLRIALSEHLKQRREVAK) are cytoplasmic. Residues 307 to 328 (TVFCLVVIFALCWFPLHLSRIL) form a helical membrane-spanning segment. At 329-347 (KKTVYDEMDKNRCELLSFL) the chain is on the extracellular side. A helical membrane pass occupies residues 348 to 372 (LLMDYIGINLATMNSCINPIALYFV). Topologically, residues 373 to 427 (SKKFKNCFQSCLCCCCYQSKSLMTSVPMNGTSIQWKNHEQNNHNTERSSHKDSIN) are cytoplasmic. Position 425 is a phosphoserine (S425).

This sequence belongs to the G-protein coupled receptor 1 family. Endothelin receptor subfamily. EDNRA sub-subfamily. Interacts with HDAC7 and KAT5.

Its subcellular location is the cell membrane. Receptor for endothelin-1. Mediates its action by association with G proteins that activate a phosphatidylinositol-calcium second messenger system. The rank order of binding affinities for ET-A is: ET1 &gt; ET2 &gt;&gt; ET3. The chain is Endothelin-1 receptor from Sus scrofa (Pig).